Here is a 298-residue protein sequence, read N- to C-terminus: Probable tRNA(His) guanylyltransferase (298 aa).

Residues Asp-58, Gly-59, and Asp-105 each contribute to the Mg(2+) site. GTP-binding positions include Asp-58–His-63 and Ser-104–Asp-105.

This sequence belongs to the tRNA(His) guanylyltransferase family. As to quaternary structure, homotetramer. Interacts with MFN1 and MFN2; functions as a guanyl-nucleotide exchange factor/GEF for MFN2 and also probably MFN1. It depends on Mg(2+) as a cofactor.

Its subcellular location is the cytoplasm. The protein localises to the mitochondrion. The enzyme catalyses a 5'-end ribonucleotide-tRNA(His) + GTP + ATP + H2O = a 5'-end phospho-guanosine-ribonucleotide-tRNA(His) + AMP + 2 diphosphate + H(+). Its function is as follows. Adds a GMP to the 5'-end of tRNA(His) after transcription and RNase P cleavage. This step is essential for proper recognition of the tRNA and for the fidelity of protein synthesis. Also functions as a guanyl-nucleotide exchange factor/GEF for the MFN1 and MFN2 mitofusins thereby regulating mitochondrial fusion. By regulating both mitochondrial dynamics and bioenergetic function, it contributes to cell survival following oxidative stress. The sequence is that of Probable tRNA(His) guanylyltransferase (THG1L) from Bos taurus (Bovine).